Here is a 533-residue protein sequence, read N- to C-terminus: Light-independent protochlorophyllide reductase subunit B (533 aa).

Aspartate 36 serves as a coordination point for [4Fe-4S] cluster. Aspartate 292 (proton donor) is an active-site residue. 428-429 (GL) is a substrate binding site.

It belongs to the ChlB/BchB/BchZ family. Protochlorophyllide reductase is composed of three subunits; BchL, BchN and BchB. Forms a heterotetramer of two BchB and two BchN subunits. [4Fe-4S] cluster serves as cofactor.

The enzyme catalyses chlorophyllide a + oxidized 2[4Fe-4S]-[ferredoxin] + 2 ADP + 2 phosphate = protochlorophyllide a + reduced 2[4Fe-4S]-[ferredoxin] + 2 ATP + 2 H2O. Its pathway is porphyrin-containing compound metabolism; bacteriochlorophyll biosynthesis (light-independent). Functionally, component of the dark-operative protochlorophyllide reductase (DPOR) that uses Mg-ATP and reduced ferredoxin to reduce ring D of protochlorophyllide (Pchlide) to form chlorophyllide a (Chlide). This reaction is light-independent. The NB-protein (BchN-BchB) is the catalytic component of the complex. The sequence is that of Light-independent protochlorophyllide reductase subunit B from Prosthecochloris aestuarii (strain DSM 271 / SK 413).